A 487-amino-acid chain; its full sequence is Glutamyl-tRNA(Gln) amidotransferase subunit A (487 aa).

Catalysis depends on charge relay system residues K77 and S152. S176 acts as the Acyl-ester intermediate in catalysis.

The protein belongs to the amidase family. GatA subfamily. In terms of assembly, heterotrimer of A, B and C subunits.

It catalyses the reaction L-glutamyl-tRNA(Gln) + L-glutamine + ATP + H2O = L-glutaminyl-tRNA(Gln) + L-glutamate + ADP + phosphate + H(+). Allows the formation of correctly charged Gln-tRNA(Gln) through the transamidation of misacylated Glu-tRNA(Gln) in organisms which lack glutaminyl-tRNA synthetase. The reaction takes place in the presence of glutamine and ATP through an activated gamma-phospho-Glu-tRNA(Gln). In Lactiplantibacillus plantarum (strain ATCC BAA-793 / NCIMB 8826 / WCFS1) (Lactobacillus plantarum), this protein is Glutamyl-tRNA(Gln) amidotransferase subunit A.